A 510-amino-acid chain; its full sequence is GTPase Der (510 aa).

EngA-type G domains follow at residues 3 to 166 (PVVA…ATAL) and 220 to 393 (IKIA…ACAT). GTP is bound by residues 9–16 (GRPNVGKS), 56–60 (DTGGI), 118–121 (NKTD), 226–233 (GRPNVGKS), 273–277 (DTAGV), and 338–341 (NKWD). In terms of domain architecture, KH-like spans 394–478 (QKTSTSMLTR…PIRIQFQEGN (85 aa)).

It belongs to the TRAFAC class TrmE-Era-EngA-EngB-Septin-like GTPase superfamily. EngA (Der) GTPase family. As to quaternary structure, associates with the 50S ribosomal subunit.

Its function is as follows. GTPase that plays an essential role in the late steps of ribosome biogenesis. The protein is GTPase Der of Haemophilus ducreyi (strain 35000HP / ATCC 700724).